The primary structure comprises 119 residues: uncharacterized protein (119 aa).

This is an uncharacterized protein from Escherichia coli O157:H7.